The primary structure comprises 338 residues: Glycerol-3-phosphate dehydrogenase [NAD(P)+] (338 aa).

NADPH-binding residues include S13, W14, and K108. Residues K108, G139, and S141 each coordinate sn-glycerol 3-phosphate. Position 143 (A143) interacts with NADPH. Residues K194, D247, S257, R258, and N259 each coordinate sn-glycerol 3-phosphate. K194 (proton acceptor) is an active-site residue. R258 contacts NADPH. NADPH is bound by residues V282 and E284.

This sequence belongs to the NAD-dependent glycerol-3-phosphate dehydrogenase family.

The protein localises to the cytoplasm. The enzyme catalyses sn-glycerol 3-phosphate + NAD(+) = dihydroxyacetone phosphate + NADH + H(+). It catalyses the reaction sn-glycerol 3-phosphate + NADP(+) = dihydroxyacetone phosphate + NADPH + H(+). It functions in the pathway membrane lipid metabolism; glycerophospholipid metabolism. Catalyzes the reduction of the glycolytic intermediate dihydroxyacetone phosphate (DHAP) to sn-glycerol 3-phosphate (G3P), the key precursor for phospholipid synthesis. The protein is Glycerol-3-phosphate dehydrogenase [NAD(P)+] of Streptococcus agalactiae serotype III (strain NEM316).